Reading from the N-terminus, the 307-residue chain is Cytochrome c1, heme protein, mitochondrial (307 aa).

The transit peptide at 1-56 (MFQFVKKKNEFLKFARLGSRAFTQNAQKTHSKGSNIALVSSSLLSVGMIALYYNVY) directs the protein to the mitochondrion. Residues 57–269 (GPSLSAGTPK…EPELDIRKKM (213 aa)) lie on the Mitochondrial intermembrane side of the membrane. In terms of domain architecture, Cytochrome c spans 89–259 (ASLRRGFQVY…DVVNFLHWAS (171 aa)). Residues cysteine 102, cysteine 105, histidine 106, and methionine 225 each contribute to the heme c site. Residues 270 to 287 (GFQVITVLTILTALSMWY) traverse the membrane as a helical segment. Residues 288–307 (KRFKWTPIKNRKIFYQRPIK) lie on the Mitochondrial matrix side of the membrane.

The protein belongs to the cytochrome c family. Component of the ubiquinol-cytochrome c oxidoreductase (cytochrome b-c1 complex, complex III, CIII), a multisubunit enzyme composed of 3 respiratory subunits cytochrome b, cytochrome c1 and Rieske protein, 2 core protein subunits, and additional low-molecular weight protein subunits. The complex exists as an obligatory dimer and forms supercomplexes (SCs) in the inner mitochondrial membrane with cytochrome c oxidase (complex IV, CIV). It depends on heme c as a cofactor.

The protein localises to the mitochondrion inner membrane. It catalyses the reaction a quinol + 2 Fe(III)-[cytochrome c](out) = a quinone + 2 Fe(II)-[cytochrome c](out) + 2 H(+)(out). Functionally, component of the ubiquinol-cytochrome c oxidoreductase, a multisubunit transmembrane complex that is part of the mitochondrial electron transport chain which drives oxidative phosphorylation. The respiratory chain contains 3 multisubunit complexes succinate dehydrogenase (complex II, CII), ubiquinol-cytochrome c oxidoreductase (cytochrome b-c1 complex, complex III, CIII) and cytochrome c oxidase (complex IV, CIV), that cooperate to transfer electrons derived from NADH and succinate to molecular oxygen, creating an electrochemical gradient over the inner membrane that drives transmembrane transport and the ATP synthase. The cytochrome b-c1 complex catalyzes electron transfer from ubiquinol to cytochrome c, linking this redox reaction to translocation of protons across the mitochondrial inner membrane, with protons being carried across the membrane as hydrogens on the quinol. In the process called Q cycle, 2 protons are consumed from the matrix, 4 protons are released into the intermembrane space and 2 electrons are passed to cytochrome c. Cytochrome c1 is a catalytic core subunit containing a c-type heme. It transfers electrons from the [2Fe-2S] iron-sulfur cluster of the Rieske protein to cytochrome c. This is Cytochrome c1, heme protein, mitochondrial (cyt1) from Schizosaccharomyces pombe (strain 972 / ATCC 24843) (Fission yeast).